The sequence spans 629 residues: Putative polypeptide N-acetylgalactosaminyltransferase 10 (629 aa).

Residues 1–12 (MGLSRYLSRRHH) lie on the Cytoplasmic side of the membrane. A helical; Signal-anchor for type II membrane protein transmembrane segment spans residues 13–33 (WVIQYCALLLFLYFIYSYVAV). Residues 34-629 (SNDAPRLNEE…RQANEHKELE (596 aa)) are Lumenal-facing. 2 N-linked (GlcNAc...) asparagine glycosylation sites follow: Asn-143 and Asn-177. Cystine bridges form between Cys-154–Cys-385, Cys-376–Cys-454, Cys-493–Cys-510, Cys-539–Cys-556, and Cys-582–Cys-598. Residues 163–275 (LPTVSVIFPF…YNWLPPLLDP (113 aa)) form a catalytic subdomain A region. The substrate site is built by Asp-204 and Arg-236. Mn(2+) contacts are provided by Asp-259 and His-261. Residues 331–393 (PFDSPVMAGG…PCSRVAHIYR (63 aa)) are catalytic subdomain B. Trp-362 contacts substrate. His-390 is a binding site for Mn(2+). Arg-393 contributes to the substrate binding site. The tract at residues 393–406 (RCKYAPFKNAGMGD) is flexible loop. A Ricin B-type lectin domain is found at 526–629 (TRWHDIRPKG…RQANEHKELE (104 aa)).

It belongs to the glycosyltransferase 2 family. GalNAc-T subfamily. The cofactor is Mn(2+).

Its subcellular location is the golgi apparatus membrane. The enzyme catalyses L-seryl-[protein] + UDP-N-acetyl-alpha-D-galactosamine = a 3-O-[N-acetyl-alpha-D-galactosaminyl]-L-seryl-[protein] + UDP + H(+). It catalyses the reaction L-threonyl-[protein] + UDP-N-acetyl-alpha-D-galactosamine = a 3-O-[N-acetyl-alpha-D-galactosaminyl]-L-threonyl-[protein] + UDP + H(+). It participates in protein modification; protein glycosylation. In terms of biological role, may catalyze the initial reaction in O-linked oligosaccharide biosynthesis, the transfer of an N-acetyl-D-galactosamine residue to a serine or threonine residue on the protein receptor. This chain is Putative polypeptide N-acetylgalactosaminyltransferase 10, found in Caenorhabditis briggsae.